We begin with the raw amino-acid sequence, 89 residues long: Small ribosomal subunit protein uS15 (89 aa).

Belongs to the universal ribosomal protein uS15 family. Part of the 30S ribosomal subunit. Forms a bridge to the 50S subunit in the 70S ribosome, contacting the 23S rRNA.

Functionally, one of the primary rRNA binding proteins, it binds directly to 16S rRNA where it helps nucleate assembly of the platform of the 30S subunit by binding and bridging several RNA helices of the 16S rRNA. In terms of biological role, forms an intersubunit bridge (bridge B4) with the 23S rRNA of the 50S subunit in the ribosome. The sequence is that of Small ribosomal subunit protein uS15 from Streptococcus thermophilus (strain CNRZ 1066).